Reading from the N-terminus, the 972-residue chain is RNA polymerase-associated protein RapA (972 aa).

The Helicase ATP-binding domain occupies 164–334 (EVGRRYAPRV…FARLRLLDPD (171 aa)). 177-184 (DEVGLGKT) provides a ligand contact to ATP. The DEAH box motif lies at 280–283 (DEAH). One can recognise a Helicase C-terminal domain in the interval 493-671 (RVNWLLEMLK…HEPEALENLI (179 aa)).

The protein belongs to the SNF2/RAD54 helicase family. RapA subfamily. As to quaternary structure, interacts with the RNAP. Has a higher affinity for the core RNAP than for the holoenzyme. Its ATPase activity is stimulated by binding to RNAP.

In terms of biological role, transcription regulator that activates transcription by stimulating RNA polymerase (RNAP) recycling in case of stress conditions such as supercoiled DNA or high salt concentrations. Probably acts by releasing the RNAP, when it is trapped or immobilized on tightly supercoiled DNA. Does not activate transcription on linear DNA. Probably not involved in DNA repair. In Photobacterium profundum (strain SS9), this protein is RNA polymerase-associated protein RapA.